The primary structure comprises 508 residues: UTP--glucose-1-phosphate uridylyltransferase (508 aa).

S13 carries the post-translational modification Phosphoserine. Residues 113–116 (LNGG), K127, Q190, and G222 each bind UTP. 115–116 (GG) provides a ligand contact to substrate. Position 127 (K127) interacts with Mg(2+). Residues H223 and 251–253 (NID) each bind substrate. Residues D253 and K396 each contribute to the UTP site. D253 is a Mg(2+) binding site. K396 is an active-site residue. At T426 the chain carries Phosphothreonine. S434 bears the Phosphoserine mark. K438 bears the N6-acetyllysine mark. Residues S448 and S461 each carry the phosphoserine modification. An oligomerization region spans residues 457 to 508 (HLTVSGDVTFGKNVSLKGTVIIIXNHGDRIDIPPGAVLENKIVSGNLRILDH). A critical for end-to-end subunit interaction region spans residues 502–503 (NL).

It belongs to the UDPGP type 1 family. Homooctamer.

Its subcellular location is the cytoplasm. The catalysed reaction is alpha-D-glucose 1-phosphate + UTP + H(+) = UDP-alpha-D-glucose + diphosphate. It functions in the pathway glycan biosynthesis; glycogen biosynthesis. UTP--glucose-1-phosphate uridylyltransferase catalyzing the conversion of glucose-1-phosphate into UDP-glucose, a crucial precursor for the production of glycogen. The sequence is that of UTP--glucose-1-phosphate uridylyltransferase (UGP2) from Sus scrofa (Pig).